The chain runs to 354 residues: Phospho-N-acetylmuramoyl-pentapeptide-transferase (354 aa).

The next 10 helical transmembrane spans lie at 16–36 (YITV…LYLM), 66–86 (TPTM…LLTV), 88–108 (IHNP…AIGV), 130–150 (FFLQ…YAHL), 168–188 (IFGI…VNLT), 193–213 (GLAT…TYIT), 227–247 (IIGV…LIGF), 257–277 (VFMG…MAII), 282–302 (VLLI…IIQV), and 331–351 (KIIV…LITL).

This sequence belongs to the glycosyltransferase 4 family. MraY subfamily. Requires Mg(2+) as cofactor.

Its subcellular location is the cell inner membrane. It carries out the reaction UDP-N-acetyl-alpha-D-muramoyl-L-alanyl-gamma-D-glutamyl-meso-2,6-diaminopimeloyl-D-alanyl-D-alanine + di-trans,octa-cis-undecaprenyl phosphate = di-trans,octa-cis-undecaprenyl diphospho-N-acetyl-alpha-D-muramoyl-L-alanyl-D-glutamyl-meso-2,6-diaminopimeloyl-D-alanyl-D-alanine + UMP. It functions in the pathway cell wall biogenesis; peptidoglycan biosynthesis. Its function is as follows. Catalyzes the initial step of the lipid cycle reactions in the biosynthesis of the cell wall peptidoglycan: transfers peptidoglycan precursor phospho-MurNAc-pentapeptide from UDP-MurNAc-pentapeptide onto the lipid carrier undecaprenyl phosphate, yielding undecaprenyl-pyrophosphoryl-MurNAc-pentapeptide, known as lipid I. The protein is Phospho-N-acetylmuramoyl-pentapeptide-transferase of Nitratiruptor sp. (strain SB155-2).